The sequence spans 105 residues: uncharacterized protein (105 aa).

This is an uncharacterized protein from Acidianus bottle-shaped virus (isolate Italy/Pozzuoli) (ABV).